The sequence spans 443 residues: 23S rRNA (uracil(1939)-C(5))-methyltransferase RlmD (443 aa).

The TRAM domain occupies 12–70 (AKKLSQKIALKVQRLDHLGAGIAEHQGKVVFIPGALPGETVEVQLTEQKKNYARAKLQR). Positions 83, 89, 92, and 171 each coordinate [4Fe-4S] cluster. S-adenosyl-L-methionine contacts are provided by Gln276, Phe305, Asn310, Glu326, Asp353, and Asp373. Cys399 functions as the Nucleophile in the catalytic mechanism.

It belongs to the class I-like SAM-binding methyltransferase superfamily. RNA M5U methyltransferase family. RlmD subfamily.

It carries out the reaction uridine(1939) in 23S rRNA + S-adenosyl-L-methionine = 5-methyluridine(1939) in 23S rRNA + S-adenosyl-L-homocysteine + H(+). Its function is as follows. Catalyzes the formation of 5-methyl-uridine at position 1939 (m5U1939) in 23S rRNA. In Shewanella amazonensis (strain ATCC BAA-1098 / SB2B), this protein is 23S rRNA (uracil(1939)-C(5))-methyltransferase RlmD.